An 88-amino-acid chain; its full sequence is Small ribosomal subunit protein bS20 (88 aa).

The tract at residues 1-26 (MANTAQARKRARQNTKRRQNSASQRS) is disordered. Positions 7–19 (ARKRARQNTKRRQ) are enriched in basic residues.

It belongs to the bacterial ribosomal protein bS20 family.

In terms of biological role, binds directly to 16S ribosomal RNA. The polypeptide is Small ribosomal subunit protein bS20 (Psychrobacter arcticus (strain DSM 17307 / VKM B-2377 / 273-4)).